A 364-amino-acid polypeptide reads, in one-letter code: uncharacterized protein (364 aa).

Helical transmembrane passes span 41–61 (NIFT…FFGL), 298–318 (VIYI…ITYM), and 329–349 (LLFY…SIII).

It localises to the membrane. This is an uncharacterized protein from Mycoplasma capricolum subsp. capricolum (strain California kid / ATCC 27343 / NCTC 10154).